The chain runs to 90 residues: Acyl-CoA-binding protein homolog (90 aa).

The ACB domain occupies 3–89 (LQEQFDQAAS…VESLIASLGL (87 aa)). Residues arginine 15, 30 to 34 (YALFK), lysine 53, lysine 57, and tyrosine 76 each bind an acyl-CoA.

Belongs to the ACBP family.

In terms of biological role, binds medium- and long-chain acyl-CoA esters with very high affinity and may function as an intracellular carrier of acyl-CoA esters. This is Acyl-CoA-binding protein homolog from Manduca sexta (Tobacco hawkmoth).